The chain runs to 479 residues: Glycogen synthase (479 aa).

K15 contributes to the ADP-alpha-D-glucose binding site.

Belongs to the glycosyltransferase 1 family. Bacterial/plant glycogen synthase subfamily.

It catalyses the reaction [(1-&gt;4)-alpha-D-glucosyl](n) + ADP-alpha-D-glucose = [(1-&gt;4)-alpha-D-glucosyl](n+1) + ADP + H(+). It functions in the pathway glycan biosynthesis; glycogen biosynthesis. Functionally, synthesizes alpha-1,4-glucan chains using ADP-glucose. This Roseobacter denitrificans (strain ATCC 33942 / OCh 114) (Erythrobacter sp. (strain OCh 114)) protein is Glycogen synthase.